Reading from the N-terminus, the 356-residue chain is ATP-dependent 6-phosphofructokinase (356 aa).

ATP-binding positions include Gly-15, 78–79 (KG), and 115–118 (GEGT). Glu-116 is a binding site for Mg(2+). Residues 138-140 (TID), Arg-175, 182-184 (MGR), Glu-235, Arg-272, and 278-281 (HLQR) each bind substrate. The active-site Proton acceptor is the Asp-140.

The protein belongs to the phosphofructokinase type A (PFKA) family. Mixed-substrate PFK group III subfamily. In terms of assembly, homodimer or homotetramer. Requires Mg(2+) as cofactor.

It is found in the cytoplasm. It catalyses the reaction beta-D-fructose 6-phosphate + ATP = beta-D-fructose 1,6-bisphosphate + ADP + H(+). It participates in carbohydrate degradation; glycolysis; D-glyceraldehyde 3-phosphate and glycerone phosphate from D-glucose: step 3/4. In terms of biological role, catalyzes the phosphorylation of D-fructose 6-phosphate to fructose 1,6-bisphosphate by ATP, the first committing step of glycolysis. The sequence is that of ATP-dependent 6-phosphofructokinase from Chloroflexus aggregans (strain MD-66 / DSM 9485).